Consider the following 699-residue polypeptide: tRNA wybutosine-synthesizing protein 4 (699 aa).

Residues arginine 94, glycine 120, aspartate 151, aspartate 197–leucine 198, and glutamate 224 contribute to the S-adenosyl-L-methionine site.

It belongs to the methyltransferase superfamily. LCMT family.

The enzyme catalyses 7-[(3S)-3-amino-3-carboxypropyl]wyosine(37) in tRNA(Phe) + S-adenosyl-L-methionine = 7-[(3S)-(3-amino-3-methoxycarbonyl)propyl]wyosine(37) in tRNA(Phe) + S-adenosyl-L-homocysteine. It catalyses the reaction 7-[(3S)-(3-amino-3-methoxycarbonyl)propyl]wyosine(37) in tRNA(Phe) + S-adenosyl-L-methionine + CO2 = wybutosine(37) in tRNA(Phe) + S-adenosyl-L-homocysteine + 2 H(+). Its pathway is tRNA modification; wybutosine-tRNA(Phe) biosynthesis. Probable S-adenosyl-L-methionine-dependent methyltransferase that acts as a component of the wybutosine biosynthesis pathway. Wybutosine is a hyper modified guanosine with a tricyclic base found at the 3'-position adjacent to the anticodon of eukaryotic phenylalanine tRNA. May methylate the carboxyl group of leucine residues to form alpha-leucine ester residues. The protein is tRNA wybutosine-synthesizing protein 4 (PPM2) of Eremothecium gossypii (strain ATCC 10895 / CBS 109.51 / FGSC 9923 / NRRL Y-1056) (Yeast).